A 461-amino-acid chain; its full sequence is Chromosomal replication initiator protein DnaA (461 aa).

The segment at 1–83 (MTASLWQQCL…LHFAVGRRPT (83 aa)) is domain I, interacts with DnaA modulators. The domain II stretch occupies residues 83–124 (TAATVQMNTAAAPVADVRIGPAITVPSWTSKQDAMPEINHKS). The interval 125–341 (NINETYTFEN…GALNRVIANA (217 aa)) is domain III, AAA+ region. ATP contacts are provided by glycine 169, glycine 171, lysine 172, and threonine 173. The tract at residues 342–461 (RFTGKPINID…YSNLIRTLSS (120 aa)) is domain IV, binds dsDNA.

It belongs to the DnaA family. In terms of assembly, oligomerizes as a right-handed, spiral filament on DNA at oriC.

Its subcellular location is the cytoplasm. In terms of biological role, plays an essential role in the initiation and regulation of chromosomal replication. ATP-DnaA binds to the origin of replication (oriC) to initiate formation of the DNA replication initiation complex once per cell cycle. Binds the DnaA box (a 9 base pair repeat at the origin) and separates the double-stranded (ds)DNA. Forms a right-handed helical filament on oriC DNA; dsDNA binds to the exterior of the filament while single-stranded (ss)DNA is stabiized in the filament's interior. The ATP-DnaA-oriC complex binds and stabilizes one strand of the AT-rich DNA unwinding element (DUE), permitting loading of DNA polymerase. After initiation quickly degrades to an ADP-DnaA complex that is not apt for DNA replication. Binds acidic phospholipids. In Tolumonas auensis (strain DSM 9187 / NBRC 110442 / TA 4), this protein is Chromosomal replication initiator protein DnaA.